The chain runs to 244 residues: tRNA (guanine-N(7)-)-methyltransferase (244 aa).

S-adenosyl-L-methionine-binding residues include E42, D67, D94, and D116. D116 is an active-site residue. Substrate-binding positions include K120, D150, and 191–194 (TYYE).

It belongs to the class I-like SAM-binding methyltransferase superfamily. TrmB family.

The catalysed reaction is guanosine(46) in tRNA + S-adenosyl-L-methionine = N(7)-methylguanosine(46) in tRNA + S-adenosyl-L-homocysteine. It participates in tRNA modification; N(7)-methylguanine-tRNA biosynthesis. Catalyzes the formation of N(7)-methylguanine at position 46 (m7G46) in tRNA. The sequence is that of tRNA (guanine-N(7)-)-methyltransferase from Porphyromonas gingivalis (strain ATCC BAA-308 / W83).